The sequence spans 116 residues: Large ribosomal subunit protein bL20 (116 aa).

It belongs to the bacterial ribosomal protein bL20 family.

Binds directly to 23S ribosomal RNA and is necessary for the in vitro assembly process of the 50S ribosomal subunit. It is not involved in the protein synthesizing functions of that subunit. In Desulforapulum autotrophicum (strain ATCC 43914 / DSM 3382 / VKM B-1955 / HRM2) (Desulfobacterium autotrophicum), this protein is Large ribosomal subunit protein bL20.